We begin with the raw amino-acid sequence, 62 residues long: Prokaryotic ubiquitin-like protein Pup 2 (62 aa).

Positions 1–34 are disordered; it reads MRQEKPKRHGREDDEPPEPAPAGRARDTTVGDDT. An ARC ATPase binding region spans residues 21–56; it reads PAGRARDTTVGDDTDELLDEIDGVLEENAVEFVRSY. Glutamate 62 participates in a covalent cross-link: Isoglutamyl lysine isopeptide (Glu-Lys) (interchain with K-? in acceptor proteins).

It belongs to the prokaryotic ubiquitin-like protein family. As to quaternary structure, strongly interacts with the proteasome-associated ATPase ARC through a hydrophobic interface; the interacting region of Pup lies in its C-terminal half. There is one Pup binding site per ARC hexamer ring.

It participates in protein degradation; proteasomal Pup-dependent pathway. In terms of biological role, protein modifier that is covalently attached to lysine residues of substrate proteins, thereby targeting them for proteasomal degradation. The tagging system is termed pupylation. This chain is Prokaryotic ubiquitin-like protein Pup 2, found in Saccharopolyspora erythraea (strain ATCC 11635 / DSM 40517 / JCM 4748 / NBRC 13426 / NCIMB 8594 / NRRL 2338).